Reading from the N-terminus, the 349-residue chain is MADTDDEHASPQNPDNRIELERQAADEAHKAKILAHPPEGPGGDPLHPPVTPRPGATRVVRDRKGGRRVVEVPSTGHSWDGIEEYDNPLPRWWLWTFYATIVWGVLYLIAYPAIPLVNGATQGLLGQNYRSDVAAEIQRFNEANAPIQAKLVETPLEEIAADPELANYTANAGAAIFRTWCAQCHGSGAGGATGYPSLLDNDWLWGGTLEEIHTTVMHGIRDPKDADTRYSEMPRFGIDGLLENAQISQVVNHVLELGGLPHDAALAAEGVEVFADNCSSCHAEDGTGDRAQGAPDLTDAVWLYGSDPATITRIVRDGPFGVMPAWTGRLSEADIVAVAAYVHSLGGGE.

Residues 1 to 67 (MADTDDEHAS…RVVRDRKGGR (67 aa)) are disordered. The Cytoplasmic portion of the chain corresponds to 1-96 (MADTDDEHAS…NPLPRWWLWT (96 aa)). Over residues 16–30 (NRIELERQAADEAHK) the composition is skewed to basic and acidic residues. The chain crosses the membrane as a helical span at residues 97–117 (FYATIVWGVLYLIAYPAIPLV). At 118-349 (NGATQGLLGQ…AYVHSLGGGE (232 aa)) the chain is on the periplasmic side. Cytochrome c domains are found at residues 168 to 258 (YTAN…LELG) and 265 to 346 (ALAA…HSLG). Residues Cys-181, Cys-184, His-185, Met-233, Cys-278, Cys-281, His-282, and Met-323 each coordinate heme c.

The protein belongs to the CcoP / FixP family. As to quaternary structure, component of the cbb3-type cytochrome c oxidase at least composed of CcoN, CcoO, CcoQ and CcoP. It depends on heme c as a cofactor.

It is found in the cell inner membrane. It functions in the pathway energy metabolism; oxidative phosphorylation. Its function is as follows. C-type cytochrome. Part of the cbb3-type cytochrome c oxidase complex. CcoP subunit is required for transferring electrons from donor cytochrome c via its heme groups to CcoO subunit. From there, electrons are shuttled to the catalytic binuclear center of CcoN subunit where oxygen reduction takes place. The complex also functions as a proton pump. The polypeptide is Cbb3-type cytochrome c oxidase subunit CcoP (Paracoccus denitrificans (strain Pd 1222)).